The chain runs to 302 residues: Sulfate adenylyltransferase subunit 2 2 (302 aa).

This sequence belongs to the PAPS reductase family. CysD subfamily. As to quaternary structure, heterodimer composed of CysD, the smaller subunit, and CysN.

It carries out the reaction sulfate + ATP + H(+) = adenosine 5'-phosphosulfate + diphosphate. It functions in the pathway sulfur metabolism; hydrogen sulfide biosynthesis; sulfite from sulfate: step 1/3. Its function is as follows. With CysN forms the ATP sulfurylase (ATPS) that catalyzes the adenylation of sulfate producing adenosine 5'-phosphosulfate (APS) and diphosphate, the first enzymatic step in sulfur assimilation pathway. APS synthesis involves the formation of a high-energy phosphoric-sulfuric acid anhydride bond driven by GTP hydrolysis by CysN coupled to ATP hydrolysis by CysD. The sequence is that of Sulfate adenylyltransferase subunit 2 2 from Alkalilimnicola ehrlichii (strain ATCC BAA-1101 / DSM 17681 / MLHE-1).